Consider the following 199-residue polypeptide: Ion-translocating oxidoreductase complex subunit A (199 aa).

Helical transmembrane passes span 8-28, 49-69, 75-95, 106-126, 138-158, and 178-198; these read LFTI…QFLG, VVFV…FILV, FLRT…VEFI, SLGI…AVLL, VVFG…MAAI, and AFFI…VIPL.

Belongs to the NqrDE/RnfAE family. As to quaternary structure, the Rnf complex is probably composed of eight subunits, including RnfA, RnfB, RnfC, RnfD, RnfE and RnfG.

It is found in the cell membrane. Functionally, part of a membrane-bound complex that couples electron transfer with translocation of ions across the membrane. Catalyzes Na(+) transport, most probably coupled to electron transfer from reduced ferredoxin to methanophenazine and heterodisulfide reductase. Involved in heterodisulfide reduction during methanogenesis from acetate. In Methanosarcina acetivorans (strain ATCC 35395 / DSM 2834 / JCM 12185 / C2A), this protein is Ion-translocating oxidoreductase complex subunit A.